Here is a 1827-residue protein sequence, read N- to C-terminus: Sucrase-isomaltase, intestinal (1827 aa).

At 2–12 (AKRKFSGLEIT) the chain is on the cytoplasmic side. Position 7 is a phosphoserine; by PKA (Ser7). The helical; Signal-anchor for type II membrane protein transmembrane segment at 13-32 (LIVLFVIVFIIAIALIAVLA) threads the bilayer. At 33–1827 (TKTPAVEEVN…LDDPIEISWS (1795 aa)) the chain is on the lumenal side. The segment at 39–64 (EEVNPSSSTPTTTSTTTSTSGSVSCP) is disordered. Residues 43–64 (PSSSTPTTTSTTTSTSGSVSCP) are compositionally biased toward low complexity. Residues 61–110 (VSCPSELNEVVNERINCIPEQSPTQAICAQRNCCWRPWNNSDIPWCFFVD) enclose the P-type 1 domain. Intrachain disulfides connect Cys63-Cys94, Cys77-Cys93, and Cys88-Cys106. An N-linked (GlcNAc...) asparagine glycan is attached at Asn99. Positions 110-1007 (DNHGYNVEGM…DLQLNPTRTR (898 aa)) are isomaltase. Residues Asp264 and Asp388 each contribute to the substrate site. Sulfotyrosine occurs at positions 391 and 400. N-linked (GlcNAc...) asparagine glycosylation is present at Asn455. Asp505 acts as the Nucleophile; for isomaltase activity in catalysis. An intrachain disulfide couples Cys520 to Cys545. Arg588 is a binding site for substrate. Catalysis depends on Asp604, which acts as the For isomaltase activity. Residues Cys635 and Cys646 are joined by a disulfide bond. Position 662 (His662) interacts with substrate. N-linked (GlcNAc...) asparagine glycans are attached at residues Asn859, Asn896, and Asn904. A P-type 2 domain is found at 932–978 (DQTFLESEKITCYPDADIATQEKCTQRGCIWDTNTVNPRAPECYFPK). Residues 1008–1827 (ITLPSEPITN…LDDPIEISWS (820 aa)) are sucrase. N-linked (GlcNAc...) asparagine glycosylation is found at Asn1235, Asn1303, Asn1325, Asn1340, Asn1354, and Asn1368. Tyr1382 and Tyr1385 each carry sulfotyrosine. Residue Asp1394 is the Nucleophile; for sucrase activity of the active site. The active-site For sucrase activity is the Glu1397. Asn1403 carries an N-linked (GlcNAc...) asparagine glycan. Residue Asp1500 is the Proton donor; for sucrase activity of the active site. N-linked (GlcNAc...) asparagine glycosylation is found at Asn1535, Asn1572, Asn1748, Asn1763, and Asn1799.

Belongs to the glycosyl hydrolase 31 family. The resulting sucrase and isomaltase subunits stay associated with one another in a complex by non-covalent linkages. Post-translationally, the precursor is proteolytically cleaved when exposed to pancreatic proteases in the intestinal lumen. N- and O-glycosylated. In terms of processing, sulfated.

Its subcellular location is the apical cell membrane. The catalysed reaction is Hydrolysis of sucrose and maltose by an alpha-D-glucosidase-type action.. It catalyses the reaction Hydrolysis of (1-&gt;6)-alpha-D-glucosidic linkages in some oligosaccharides produced from starch and glycogen by alpha-amylase, and in isomaltose.. Its function is as follows. Plays an important role in the final stage of carbohydrate digestion. Isomaltase activity is specific for both alpha-1,4- and alpha-1,6-oligosaccharides. In Oryctolagus cuniculus (Rabbit), this protein is Sucrase-isomaltase, intestinal (SI).